A 269-amino-acid chain; its full sequence is Shikimate dehydrogenase (NADP(+)) (269 aa).

Shikimate is bound by residues 19 to 21 (SLS) and T66. The Proton acceptor role is filled by K70. An NADP(+)-binding site is contributed by D82. N91 and D106 together coordinate shikimate. Residues 130 to 134 (GAGGA), 153 to 158 (NRTKEK), and I214 each bind NADP(+). Y216 contributes to the shikimate binding site. G235 serves as a coordination point for NADP(+). Q242 is a binding site for shikimate.

Belongs to the shikimate dehydrogenase family. As to quaternary structure, homodimer.

It carries out the reaction shikimate + NADP(+) = 3-dehydroshikimate + NADPH + H(+). It participates in metabolic intermediate biosynthesis; chorismate biosynthesis; chorismate from D-erythrose 4-phosphate and phosphoenolpyruvate: step 4/7. Its function is as follows. Involved in the biosynthesis of the chorismate, which leads to the biosynthesis of aromatic amino acids. Catalyzes the reversible NADPH linked reduction of 3-dehydroshikimate (DHSA) to yield shikimate (SA). The sequence is that of Shikimate dehydrogenase (NADP(+)) from Aquifex aeolicus (strain VF5).